A 705-amino-acid chain; its full sequence is Cell cycle serine/threonine-protein kinase CDC5/MSD2 (705 aa).

T23 carries the phosphothreonine modification. The segment covering 41–53 has biased composition (basic and acidic residues); that stretch reads QTKRLDPNNDHHH. Positions 41–63 are disordered; sequence QTKRLDPNNDHHHQPAQKKKREK. In terms of domain architecture, Protein kinase spans 82–337; that stretch reads YHRGHFLGEG…LTEIMDYVWF (256 aa). ATP-binding positions include 88-96 and K110; that span reads LGEGGFARC. Catalysis depends on D204, which acts as the Proton acceptor. S419 is modified (phosphoserine). In terms of domain architecture, POLO box 1 spans 513 to 595; it reads IVTKWVDYSN…VDFFAKYMKA (83 aa). Zn(2+) is bound by residues E553, H569, H609, and D612. Residues 614 to 700 form the POLO box 2 domain; sequence FLRRYTRYKP…IKEGLKQKST (87 aa).

The protein belongs to the protein kinase superfamily. Ser/Thr protein kinase family. CDC5/Polo subfamily. As to quaternary structure, interacts with CDC48; the interaction is likely to result in CDC5 degradation. Interacts with CSA1.

It localises to the cytoplasm. The protein resides in the cytoskeleton. It is found in the microtubule organizing center. Its subcellular location is the spindle pole body. It carries out the reaction L-seryl-[protein] + ATP = O-phospho-L-seryl-[protein] + ADP + H(+). The catalysed reaction is L-threonyl-[protein] + ATP = O-phospho-L-threonyl-[protein] + ADP + H(+). Protein kinase required for the cell cycle where it is involved in mitotic exit. A component of the fear (CDC14 early anaphase release) network which promotes CDC14 release from the nucleolus during early anaphase. Phosphorylates SCC1/MCD1 and NET1. The chain is Cell cycle serine/threonine-protein kinase CDC5/MSD2 (CDC5) from Saccharomyces cerevisiae (strain ATCC 204508 / S288c) (Baker's yeast).